The primary structure comprises 158 residues: MAEQVTKSVLFVCLGNICRSPIAEAVFRKLVTDQNVSDNWVIDSSAVSDWNVGRSPDPRAVSCLRHHGINTAHKARQITKEDFATFDYILCMDESNLRDLNRKGNQVKNCRAKIELLGSYDPQKQLIIEDPYYGNDSDFEAVYQQCVRCCRAFLEKVR.

Alanine 2 carries the N-acetylalanine modification. The active-site Nucleophile is the cysteine 13. Residue arginine 19 is part of the active site. Residue aspartate 130 is the Proton donor of the active site. A phosphotyrosine mark is found at tyrosine 132 and tyrosine 133.

Belongs to the low molecular weight phosphotyrosine protein phosphatase family. As to quaternary structure, interacts with EPHA2; dephosphorylates EPHA2. Interacts with EPHB1. Interacts with the SH3 domain of SPTAN1. In terms of processing, phosphorylated by LCK. Phosphorylation at Tyr-132 increases its phosphatase activity.

The protein resides in the cytoplasm. The catalysed reaction is O-phospho-L-tyrosyl-[protein] + H2O = L-tyrosyl-[protein] + phosphate. The enzyme catalyses a phosphate monoester + H2O = an alcohol + phosphate. With respect to regulation, inhibited by sulfhydryl reagents. Acts on tyrosine phosphorylated proteins, low-MW aryl phosphates and natural and synthetic acyl phosphates with differences in substrate specificity between isoform 1 and isoform 2. The polypeptide is Low molecular weight phosphotyrosine protein phosphatase (ACP1) (Sus scrofa (Pig)).